The primary structure comprises 90 residues: Probable Fe(2+)-trafficking protein (90 aa).

This sequence belongs to the Fe(2+)-trafficking protein family.

Functionally, could be a mediator in iron transactions between iron acquisition and iron-requiring processes, such as synthesis and/or repair of Fe-S clusters in biosynthetic enzymes. In Aliivibrio fischeri (strain ATCC 700601 / ES114) (Vibrio fischeri), this protein is Probable Fe(2+)-trafficking protein.